Consider the following 126-residue polypeptide: Large ribosomal subunit protein bL17 (126 aa).

It belongs to the bacterial ribosomal protein bL17 family. As to quaternary structure, part of the 50S ribosomal subunit. Contacts protein L32.

The sequence is that of Large ribosomal subunit protein bL17 from Vibrio atlanticus (strain LGP32) (Vibrio splendidus (strain Mel32)).